The chain runs to 672 residues: MSALPPSSSSPAVLALHSATHKDTILHKFDTLRRSELLCDITLIVEDVHFKAHKALLAASSEYFSALFTAEEQVSQSLYKLDGMTANTFSSVLEFMYSAVVLVDESSSEQLMEMARFLVIPDLIKAHEDLQAVDEHMQVKRKRGRPKKNQDLSQKENPESELQAQTSSEIQEVNEEPASPATDGSDGEFNPREERRREGKRKIKQPIRLKGFRMDDLMEGKEPGKRGRRRKYPDTEARCEECGKVFKSHLFLKIHQRTHTGEKPFRCSVCGKEFTQKHTLLVHQRMHTGEKPYICTVCSKALSTKHSLLEHMNLHTENKLFTCEECGKSFSQQRQLKSHNRVHTGKGLPECAECHHKFMDAAQLKKHLRTHTGEKPFTCEICGKCFTAKSTLQTHIRIHRGEKPYVCKVCDKTFSDPSARRRHEVSHTGKKTFSCSICKVSFARKDNLKAHIKTHNKENPPAQAESTDKPPQSAPEQQEQEQQQQQQTSGDKELHSILQLQPFQLPAHGEQEIQLLVTGENLSLDQEQSISIITSEDTEQSLALLTQPSGHVQNLAVVTPDGNAQIQTISVLGGEVNGGDPEQMHVITLSKEAMEQLQVHHGAPQQLQVIHQLSEEQTGPVAGIHISGQSGQAISISQTTEQIPSDQIQGQTFQIQAGTVSYLYTTSMNPQN.

One can recognise a BTB domain in the interval cysteine 39–glutamate 105. The tract at residues histidine 136–arginine 208 is disordered. The a.T hook 1 DNA-binding region spans lysine 140–leucine 152. The segment covering lysine 148 to proline 158 has biased composition (basic and acidic residues). Polar residues predominate over residues serine 160–glutamine 171. A compositionally biased stretch (basic residues) spans glutamate 198–arginine 208. The segment at residues proline 223–threonine 235 is a DNA-binding region (a.T hook 2). 8 consecutive C2H2-type zinc fingers follow at residues alanine 237 to histidine 259, phenylalanine 265 to histidine 287, tyrosine 293 to histidine 315, phenylalanine 321 to histidine 343, proline 349 to histidine 371, phenylalanine 377 to histidine 399, tyrosine 405 to histidine 427, and phenylalanine 433 to histidine 455. A disordered region spans residues lysine 453–lysine 492. The span at glutamate 476 to glutamine 487 shows a compositional bias: low complexity.

The protein belongs to the krueppel C2H2-type zinc-finger protein family.

It is found in the nucleus. In terms of biological role, may be involved in BMP2-induced transcription. The chain is Zinc finger and BTB domain-containing protein 24 (zbtb24) from Danio rerio (Zebrafish).